Here is a 100-residue protein sequence, read N- to C-terminus: Putative pterin-4-alpha-carbinolamine dehydratase (100 aa).

Belongs to the pterin-4-alpha-carbinolamine dehydratase family.

It carries out the reaction (4aS,6R)-4a-hydroxy-L-erythro-5,6,7,8-tetrahydrobiopterin = (6R)-L-erythro-6,7-dihydrobiopterin + H2O. The sequence is that of Putative pterin-4-alpha-carbinolamine dehydratase from Bradyrhizobium sp. (strain ORS 278).